The primary structure comprises 260 residues: MDGWQRAFVLHARPYSETSLLLDFFTEQQGRVRVLAKGARSRRSALKGVLQPFTPLLARWSGRGEVKTLRSAEPVSLGLPLSGLMLYSGLYINELLSRVLDHETDYSKLFYDYLHCLQWLAGATGSPEPALRRFELALLSHLGYGVDFLHCAGSGEPVDDAMTYRYREEKGFTASVLLDRYSFSGRELRALAEGEFPDIDTLRAAKRFTRMALKPYLGGKPLKSHELFRQFLDRRPQASAGVAAARKAGGDGSDGDEGEQ.

A disordered region spans residues serine 239–glutamine 260.

The protein belongs to the RecO family.

In terms of biological role, involved in DNA repair and RecF pathway recombination. The polypeptide is DNA repair protein RecO (Sodalis glossinidius (strain morsitans)).